The sequence spans 221 residues: Casparian strip membrane protein 2 (221 aa).

The segment at 1–21 (MEKSEATTIEIGETSRESKGK) is disordered. Topologically, residues 1–41 (MEKSEATTIEIGETSRESKGKTPLLAEVEQTARTAGSYRRG) are cytoplasmic. The helical transmembrane segment at 42-62 (VAIFDLILRVSAATSALAATI) threads the bilayer. The Extracellular portion of the chain corresponds to 63-89 (TMGTTEQTLPFFTQFFQFQASYDDLPA). The helical transmembrane segment at 90–110 (FTFFVIALSIVTGYLVLSVPF) threads the bilayer. Residues 111–131 (SVVCIAQPLAAVPRLLLIVCD) are Cytoplasmic-facing. A helical transmembrane segment spans residues 132–152 (TLTVTLATAAASSSAAIVYLA). The Extracellular portion of the chain corresponds to 153 to 221 (HNGNADANWL…HYWDRRWCEI (69 aa)).

This sequence belongs to the Casparian strip membrane proteins (CASP) family. In terms of assembly, homodimer and heterodimers.

The protein resides in the cell membrane. Functionally, regulates membrane-cell wall junctions and localized cell wall deposition. Required for establishment of the Casparian strip membrane domain (CSD) and the subsequent formation of Casparian strips, a cell wall modification of the root endodermis that determines an apoplastic barrier between the intraorganismal apoplasm and the extraorganismal apoplasm and prevents lateral diffusion. This chain is Casparian strip membrane protein 2, found in Erythranthe guttata (Yellow monkey flower).